Here is a 1072-residue protein sequence, read N- to C-terminus: Dyslexia-associated protein KIAA0319 (1072 aa).

The first 20 residues, 1–20, serve as a signal peptide directing secretion; that stretch reads MAPPTGVLSSLLLLVTIAGC. The MANSC domain maps to 21-99; it reads ARKQCSEGRT…PKKMGPIRSY (79 aa). At 21–955 the chain is on the extracellular side; that stretch reads ARKQCSEGRT…WDGESNCEWS (935 aa). Disordered regions lie at residues 168 to 277 and 295 to 327; these read LQPS…SLPP and VTPGSTEHSIPTPPTSAAPSESTPSELPISPTT. N-linked (GlcNAc...) asparagine glycans are attached at residues asparagine 196, asparagine 219, and asparagine 262. Residues 254 to 265 are compositionally biased toward polar residues; that stretch reads SQLQEQSSNSSG. Residues 311–320 show a composition bias toward low complexity; the sequence is AAPSESTPSE. 5 PKD domains span residues 341–427, 435–524, 530–620, 621–714, and 720–811; these read DNLI…VKPA, VAVV…VNNA, VANA…VQPE, NNRP…VKKE, and RARA…VQPD. 6 N-linked (GlcNAc...) asparagine glycosylation sites follow: asparagine 394, asparagine 421, asparagine 498, asparagine 513, asparagine 536, and asparagine 551. Asparagine 733 is a glycosylation site (N-linked (GlcNAc...) asparagine). A helical membrane pass occupies residues 956–976; sequence IFYVTVLAFTLIVLTGGFTWL. Residues 977-1072 lie on the Cytoplasmic side of the membrane; sequence CICCCKRQKR…ASFSYCSKDR (96 aa). The Endocytosis signal motif lies at 995–998; it reads YTIL. The tract at residues 1045–1072 is disordered; it reads KMERGNPKVSMNGSIRNGASFSYCSKDR. Residues 1053-1072 show a composition bias toward polar residues; that stretch reads VSMNGSIRNGASFSYCSKDR.

Homodimer. Interacts with AP2M1; required for clathrin-mediated endocytosis. In terms of processing, N-glycosylated. Post-translationally, O-glycosylated. Shedding of the extracellular domain and intramembrane cleavage produce several proteolytic products. The intramembrane cleavage releases a soluble cytoplasmic polypeptide that translocates to the nucleolus. In terms of tissue distribution, detected in adult brain cortex and fetal frontal lobe (at protein level). Highly expressed in brain cortex, putamen, amygdala, hippocampus and cerebellum.

It is found in the cell membrane. It localises to the early endosome membrane. Its function is as follows. Involved in neuronal migration during development of the cerebral neocortex. May function in a cell autonomous and a non-cell autonomous manner and play a role in appropriate adhesion between migrating neurons and radial glial fibers. May also regulate growth and differentiation of dendrites. The polypeptide is Dyslexia-associated protein KIAA0319 (KIAA0319) (Homo sapiens (Human)).